Here is a 247-residue protein sequence, read N- to C-terminus: Adenosylcobinamide-GDP ribazoletransferase (247 aa).

6 helical membrane-spanning segments follow: residues 31–51, 55–75, 109–129, 135–155, 183–203, and 227–247; these read ILFY…VTCI, LPAL…TGGL, IGVL…YVLI, LFLI…FLTT, VLLL…GFLI, and AIEI…FYLV.

It belongs to the CobS family. The cofactor is Mg(2+).

Its subcellular location is the cell inner membrane. The catalysed reaction is alpha-ribazole + adenosylcob(III)inamide-GDP = adenosylcob(III)alamin + GMP + H(+). It carries out the reaction alpha-ribazole 5'-phosphate + adenosylcob(III)inamide-GDP = adenosylcob(III)alamin 5'-phosphate + GMP + H(+). It participates in cofactor biosynthesis; adenosylcobalamin biosynthesis; adenosylcobalamin from cob(II)yrinate a,c-diamide: step 7/7. In terms of biological role, joins adenosylcobinamide-GDP and alpha-ribazole to generate adenosylcobalamin (Ado-cobalamin). Also synthesizes adenosylcobalamin 5'-phosphate from adenosylcobinamide-GDP and alpha-ribazole 5'-phosphate. The polypeptide is Adenosylcobinamide-GDP ribazoletransferase (Acinetobacter baumannii (strain ATCC 17978 / DSM 105126 / CIP 53.77 / LMG 1025 / NCDC KC755 / 5377)).